The chain runs to 658 residues: MLKVVGASWQKTRIGTYILIGAGLLVIGAFFIGYMERPEYDGTYCATALWTKQVGFQIENWKQQNDLVNIPTGVGRICYKDSVYENGWAQIEVETQRTYPDWVQAYAAGMLEGSLTWRNIYNQWSNTISSSCERDESTQKFCGWLRDLLTTNYHRLKRQTEKAENDHYWHQLHLFITQLEGLETGYKRGASRARSDLEEEIPFSDFLLMNAAADIQDLKIYYENYELQNSTEHTEEPGTDQPKNFFLPSATMLTKIVQEEESPQVLQLLFGHSTAGSYSSMLRIQKRYKFHYHFSSKLRSNTVPGVDITFTGYPGILGSTDDFYTIKGRHLHAIVGGVGIKNENLQLWKTVDPKKMVPLVARVMAANRISQNRQTWASAMSRHPFTGAKQWITVDLNKMKVQDNLYNVLEGDDKHDDAPVVLNEKDRTAIQQRHDQLRDMVWIAEQLPGMMTKKDVTQGFLVPGNTSWLANGVPYFKNVLELSGVNYSEDQQLTVADEEELTSLASVDKYLRTHGFRGDLLGSQESIAYGNIDLKLFSYNARLGISDFHAFAGPVFLRFQHTQPRTLEDEGQDGGVPPAASMGDERLSVSIEDADSLAEMELITERRSVRNDMRAIAMRKIGSGPFKWSEMSPVEEGGGHEGHPDEWNFDKVSPKWAW.

A signal peptide spans 1-29 (MLKVVGASWQKTRIGTYILIGAGLLVIGA). N-linked (GlcNAc...) asparagine glycans are attached at residues Asn229, Asn465, and Asn486.

It belongs to the phospholipase B-like family. Expressed in neural and glial progenitors prior to, but not after, differentiation. Not expressed in late third instar disks, but is expressed uniformly by early third instar disks, in the imaginal ring of the proventriculus and in the salivary gland.

Its subcellular location is the secreted. In terms of biological role, putative phospholipase. Involved in the regulation of cellular plasticity in imaginal disks. The sequence is that of Putative phospholipase B-like lamina ancestor (lama) from Drosophila melanogaster (Fruit fly).